Reading from the N-terminus, the 136-residue chain is Histone H3.3 type c (136 aa).

Residues 1–30 form a disordered region; it reads MARTKQTARKSTGAKVPRKHLSSKSSFPSK. Residue lysine 5 is modified to N6,N6,N6-trimethyllysine; by set1; alternate. Residue lysine 5 is modified to N6,N6-dimethyllysine; by set1; alternate. An N6-acetyllysine; alternate mark is found at lysine 5 and lysine 10. Residue lysine 5 is modified to N6-methyllysine; by set1; alternate. N6,N6,N6-trimethyllysine; alternate is present on lysine 10. Lysine 10 bears the N6,N6-dimethyllysine; alternate mark. Position 10 is an N6-methyllysine; alternate (lysine 10). A Phosphoserine modification is found at serine 11. Lysine 15 carries the N6-acetyllysine modification. Residues lysine 19, lysine 24, and lysine 37 each carry the N6-acetyllysine; alternate modification. 3 positions are modified to N6-methyllysine; alternate: lysine 19, lysine 24, and lysine 37. Lysine 37 carries the N6,N6,N6-trimethyllysine; alternate modification. An N6,N6-dimethyllysine; alternate modification is found at lysine 37. The residue at position 57 (lysine 57) is an N6-acetyllysine. Position 80 is an N6,N6,N6-trimethyllysine; alternate (lysine 80). Residue lysine 80 is modified to N6,N6-dimethyllysine; alternate. At lysine 80 the chain carries N6-methyllysine; alternate.

This sequence belongs to the histone H3 family. As to quaternary structure, the nucleosome is a histone octamer containing two molecules each of H2A, H2B, H3 and H4 assembled in one H3-H4 heterotetramer and two H2A-H2B heterodimers. The octamer wraps approximately 147 bp of DNA. Post-translationally, acetylation is generally linked to gene activation. Different methylation states of H3K4 mark distinct developmental phases. H3K4me2 is associated with euchromatic regions. H3K4me3 is a mark of active chromatin. set1 is responsible for all mono-, di- and tri-methylation of H3K4. H3K4me facilitates subsequent acetylation of H3 and H4. Methylation at H3K9 is linked to gene repression. In terms of processing, H3S10ph, which is linked to gene activation, prevents methylation at H3K9 but facilitates acetylation of H3 and H4.

The protein localises to the nucleus. It is found in the chromosome. Its function is as follows. Core component of nucleosome. Nucleosomes wrap and compact DNA into chromatin, limiting DNA accessibility to the cellular machineries which require DNA as a template. Histones thereby play a central role in transcription regulation, DNA repair, DNA replication and chromosomal stability. DNA accessibility is regulated via a complex set of post-translational modifications of histones, also called histone code, and nucleosome remodeling. The chain is Histone H3.3 type c (H3c) from Dictyostelium discoideum (Social amoeba).